The sequence spans 453 residues: Acyl-coenzyme A thioesterase 2, mitochondrial (453 aa).

The N-terminal 42 residues, 1–42 (MVASSFAVLRASRLCQQDWKSWARLFVPPPLSTGGRTTWART), are a transit peptide targeting the mitochondrion. The residue at position 83 (lysine 83) is an N6-acetyllysine. Catalysis depends on charge relay system residues serine 273, aspartate 365, and histidine 399. An N6-succinyllysine modification is found at lysine 447.

This sequence belongs to the C/M/P thioester hydrolase family. As to quaternary structure, monomer. As to expression, highly expressed in brown and white adipose tissue, muscle, heart, kidney, lung, adrenal gland and spleen; weakly expressed in intestine, testis and brain.

The protein localises to the mitochondrion matrix. The enzyme catalyses hexadecanoyl-CoA + H2O = hexadecanoate + CoA + H(+). It carries out the reaction tetradecanoyl-CoA + H2O = tetradecanoate + CoA + H(+). The catalysed reaction is octadecanoyl-CoA + H2O = octadecanoate + CoA + H(+). It catalyses the reaction eicosanoyl-CoA + H2O = eicosanoate + CoA + H(+). The enzyme catalyses decanoyl-CoA + H2O = decanoate + CoA + H(+). It carries out the reaction dodecanoyl-CoA + H2O = dodecanoate + CoA + H(+). The catalysed reaction is (9Z)-octadecenoyl-CoA + H2O = (9Z)-octadecenoate + CoA + H(+). It catalyses the reaction (9Z)-hexadecenoyl-CoA + H2O = (9Z)-hexadecenoate + CoA + H(+). The enzyme catalyses (9E)-octadecenoyl-CoA + H2O = (9E)-octadecenoate + CoA + H(+). It carries out the reaction (9Z,12Z)-octadecadienoyl-CoA + H2O = (9Z,12Z)-octadecadienoate + CoA + H(+). It functions in the pathway lipid metabolism; fatty acid metabolism. Its function is as follows. Catalyzes the hydrolysis of acyl-CoAs into free fatty acids and coenzyme A (CoASH), regulating their respective intracellular levels. Displays higher activity toward long chain acyl CoAs (C14-C20). The enzyme is involved in enhancing the hepatic fatty acid oxidation in mitochondria. This is Acyl-coenzyme A thioesterase 2, mitochondrial (Acot2) from Mus musculus (Mouse).